Consider the following 279-residue polypeptide: MAIRKYRPTTPGRRGSSVADFAEITRSTPEKSLLAPLPKKGGRNAHGRITTRHQGGGHKRQYRIIDFKRVDKDGVPAKVAHIEYDPNRTARIALLHFLDGEKRYIVAPKDLKQGDIVESGPGADIKPGNNLPLRNIPVGTTIHNVELRPGGGAKLARSAGVGIQLLGREGAYATLRMPSGEIRRVDVRCRASIGEIGNADQSNINWGKAGRMRWKGKRPTVRGVAMNPVDHPHGGGEGKTSGGRHPVNPQGKPEGRTRRKGQPSDRLIVRRRYATRKRG.

Disordered stretches follow at residues 33-58 and 223-279; these read LLAP…GGGH and GVAM…RKRG. Basic residues-rich tracts occupy residues 40-58 and 269-279; these read KGGR…GGGH and VRRRYATRKRG.

Belongs to the universal ribosomal protein uL2 family. In terms of assembly, part of the 50S ribosomal subunit. Forms a bridge to the 30S subunit in the 70S ribosome.

In terms of biological role, one of the primary rRNA binding proteins. Required for association of the 30S and 50S subunits to form the 70S ribosome, for tRNA binding and peptide bond formation. It has been suggested to have peptidyltransferase activity; this is somewhat controversial. Makes several contacts with the 16S rRNA in the 70S ribosome. This chain is Large ribosomal subunit protein uL2, found in Salinispora arenicola (strain CNS-205).